Reading from the N-terminus, the 715-residue chain is ATP-dependent DNA helicase Hel308 (715 aa).

Residues Q35 and 53–60 (SPTGSGKT) contribute to the ATP site. Residues 40 to 203 (KKGLLDGNRL…WLGAEPVATN (164 aa)) enclose the Helicase ATP-binding domain. Positions 152–155 (DELH) match the DEAH box motif. The 207-residue stretch at 236-442 (HGDDAIIAYT…ERAFYTFLLG (207 aa)) folds into the Helicase C-terminal domain.

The protein belongs to the helicase family. Hel308 subfamily. Monomer. Interacts with PINA ATPase which decreases both DNA helicase activities of this protein.

The catalysed reaction is Couples ATP hydrolysis with the unwinding of duplex DNA by translocating in the 3'-5' direction.. It carries out the reaction ATP + H2O = ADP + phosphate + H(+). It catalyses the reaction Couples ATP hydrolysis with the unwinding of duplex DNA at the replication fork by translocating in the 5'-3' direction. This creates two antiparallel DNA single strands (ssDNA). The leading ssDNA polymer is the template for DNA polymerase III holoenzyme which synthesizes a continuous strand.. With respect to regulation, PINA inhibits the (weak) 5'-3' but not the 3'-5' helicase activity of this protein on overhang substrates. DNA-dependent ATPase and 3'-5' DNA helicase that may be involved in repair of stalled replication forks. Its function is as follows. Has predominantly 3'-5' helicase activity but also a weak 5'-3' helicase activity. Has the ability to unwind replication forks, preferentially removing the lagging strand. Hjc, Hjm (Hel308) and branch migration ATPase PINA coordinate HJ migration and cleavage of replication forks in a coordinated way. This is ATP-dependent DNA helicase Hel308 from Saccharolobus islandicus (strain REY15A) (Sulfolobus islandicus).